A 330-amino-acid polypeptide reads, in one-letter code: G-protein coupled receptor 3 (330 aa).

Residues 1–42 are Extracellular-facing; that stretch reads MMWGAGSSMAWFSAGSGSVNVSSVDPVEEPTGPATLLPSPRA. A glycan (N-linked (GlcNAc...) asparagine) is linked at N20. The chain crosses the membrane as a helical span at residues 43–62; sequence WDVVLCISGTLVSCENALVV. Over 63–74 the chain is Cytoplasmic; the sequence is AIIVGTPAFRAP. The helical transmembrane segment at 75–98 threads the bilayer; sequence MFLLVGSLAVADLLAGLGLVLHFA. Over 99-110 the chain is Extracellular; it reads ADFCIGSPEMSL. A helical membrane pass occupies residues 111-132; that stretch reads MLVGVLAMAFTASIGSLLAITV. The Cytoplasmic portion of the chain corresponds to 133–153; that stretch reads DRYLSLYNALTYYSETTVTRT. The chain crosses the membrane as a helical span at residues 154-173; it reads YVMLALVWVGALGLGLVPVL. At 174–198 the chain is on the extracellular side; it reads AWNCRDGLTTCGVVYPLSKNHLVVL. The helical transmembrane segment at 199-217 threads the bilayer; the sequence is AIAFFMVFGIMLQLYAQIC. Topologically, residues 218-245 are cytoplasmic; that stretch reads RIVCRHAQQIALQRHLLPASHYVATRKG. Residues 246–272 traverse the membrane as a helical segment; that stretch reads IATLAVVLGAFAACWLPFTVYCLLGDA. Residues 273 to 277 lie on the Extracellular side of the membrane; that stretch reads DSPRL. A helical membrane pass occupies residues 278-299; sequence YTYLTLLPATYNSMINPVIYAF. Residues 300-330 are Cytoplasmic-facing; that stretch reads RNQDVQKVLWAICCCCSTSKIPFRSRSPSDV. A lipid anchor (S-palmitoyl cysteine) is attached at C313. A phosphoserine mark is found at S324, S326, and S328.

It belongs to the G-protein coupled receptor 1 family. Expressed in both the forebrain and hindbrain, with the highest level in habenula. Lower level expression in the testis. Expressed in several metabolically active peripheral tissues, although at lower levels than in the central nervous system (CNS).

The protein resides in the cell membrane. Constitutively active G-protein coupled receptor that maintains high 3'-5'-cyclic adenosine monophosphate (cAMP) levels that a plays a role in serveral processes including meiotic arrest in oocytes or neuronal development via activation of numerous intracellular signaling pathways. Acts as an essential activator of thermogenic adipocytes and drives thermogenesis via its intrinsic G(s)-coupling activity without the requirement of a ligand. Has a potential role in modulating a number of brain functions, including behavioral responses to stress, amyloid-beta peptide generation in neurons. Stimulates neurite outgrowth in cerebellar granular neurons modulated via PKA, ERK, and most strongly PI3K-mediated signaling pathways. The chain is G-protein coupled receptor 3 (Gpr3) from Mus musculus (Mouse).